The chain runs to 124 residues: Small ribosomal subunit protein uS11 (124 aa).

The protein belongs to the universal ribosomal protein uS11 family. As to quaternary structure, part of the 30S ribosomal subunit. Interacts with proteins S7 and S18. Binds to IF-3.

Its function is as follows. Located on the platform of the 30S subunit, it bridges several disparate RNA helices of the 16S rRNA. Forms part of the Shine-Dalgarno cleft in the 70S ribosome. In Sulfurovum sp. (strain NBC37-1), this protein is Small ribosomal subunit protein uS11.